A 110-amino-acid polypeptide reads, in one-letter code: METIAKHRHARSSAQKVRLVADLIRGKKVSQALETLTYTNKKAAGLVKKVLESAIANAEHNDGADIDDLKVTKIFVDEGPSMKRIMPRAKGRADRILKRTSHITVVVSDR.

This sequence belongs to the universal ribosomal protein uL22 family. In terms of assembly, part of the 50S ribosomal subunit.

This protein binds specifically to 23S rRNA; its binding is stimulated by other ribosomal proteins, e.g. L4, L17, and L20. It is important during the early stages of 50S assembly. It makes multiple contacts with different domains of the 23S rRNA in the assembled 50S subunit and ribosome. Functionally, the globular domain of the protein is located near the polypeptide exit tunnel on the outside of the subunit, while an extended beta-hairpin is found that lines the wall of the exit tunnel in the center of the 70S ribosome. The chain is Large ribosomal subunit protein uL22 from Yersinia pseudotuberculosis serotype O:1b (strain IP 31758).